The following is a 430-amino-acid chain: Glutamyl-tRNA reductase (430 aa).

Substrate-binding positions include 50–53 (TCNR), S108, 113–115 (EPQ), and Q119. C51 functions as the Nucleophile in the catalytic mechanism. NADP(+) is bound at residue 188–193 (GAGEMA).

It belongs to the glutamyl-tRNA reductase family. In terms of assembly, homodimer.

It carries out the reaction (S)-4-amino-5-oxopentanoate + tRNA(Glu) + NADP(+) = L-glutamyl-tRNA(Glu) + NADPH + H(+). The protein operates within porphyrin-containing compound metabolism; protoporphyrin-IX biosynthesis; 5-aminolevulinate from L-glutamyl-tRNA(Glu): step 1/2. In terms of biological role, catalyzes the NADPH-dependent reduction of glutamyl-tRNA(Glu) to glutamate 1-semialdehyde (GSA). In Desulfovibrio desulfuricans (strain ATCC 27774 / DSM 6949 / MB), this protein is Glutamyl-tRNA reductase.